Here is a 252-residue protein sequence, read N- to C-terminus: Ubiquinone/menaquinone biosynthesis C-methyltransferase UbiE (252 aa).

S-adenosyl-L-methionine-binding positions include Thr71, Asp100, 124–125 (DA), and Ser141.

The protein belongs to the class I-like SAM-binding methyltransferase superfamily. MenG/UbiE family.

The catalysed reaction is a 2-demethylmenaquinol + S-adenosyl-L-methionine = a menaquinol + S-adenosyl-L-homocysteine + H(+). The enzyme catalyses a 2-methoxy-6-(all-trans-polyprenyl)benzene-1,4-diol + S-adenosyl-L-methionine = a 5-methoxy-2-methyl-3-(all-trans-polyprenyl)benzene-1,4-diol + S-adenosyl-L-homocysteine + H(+). It participates in quinol/quinone metabolism; menaquinone biosynthesis; menaquinol from 1,4-dihydroxy-2-naphthoate: step 2/2. The protein operates within cofactor biosynthesis; ubiquinone biosynthesis. Its function is as follows. Methyltransferase required for the conversion of demethylmenaquinol (DMKH2) to menaquinol (MKH2) and the conversion of 2-polyprenyl-6-methoxy-1,4-benzoquinol (DDMQH2) to 2-polyprenyl-3-methyl-6-methoxy-1,4-benzoquinol (DMQH2). The protein is Ubiquinone/menaquinone biosynthesis C-methyltransferase UbiE of Caulobacter vibrioides (strain ATCC 19089 / CIP 103742 / CB 15) (Caulobacter crescentus).